Here is a 694-residue protein sequence, read N- to C-terminus: Proprotein convertase subtilisin/kexin type 9 (694 aa).

Residues 1-34 (MGTHCSAWLRWPLLPLLPPLLLLLLLLCPTGAGA) form the signal peptide. The propeptide occupies 35–155 (QDEDGDYEEL…IEEDSFVFAQ (121 aa)). At Tyr41 the chain carries Sulfotyrosine. Position 50 is a phosphoserine (Ser50). One can recognise a Peptidase S8 domain in the interval 158 to 470 (PWNLERIIPA…RTVWSAHSGP (313 aa)). Active-site charge relay system residues include Asp189 and His229. 2 disulfide bridges follow: Cys226-Cys258 and Cys326-Cys361. Ser389 functions as the Charge relay system in the catalytic mechanism. The tract at residues 453–694 (ETGGQLLCRT…RPSAKASWVQ (242 aa)) is C-terminal domain. Intrachain disulfides connect Cys460-Cys530, Cys480-Cys529, and Cys489-Cys512. The Cell attachment site motif lies at 499–501 (RGD). A glycan (N-linked (GlcNAc...) asparagine) is linked at Asn536. 6 disulfide bridges follow: Cys537–Cys604, Cys555–Cys603, Cys565–Cys591, Cys611–Cys682, Cys629–Cys681, and Cys638–Cys657. Phosphoserine is present on Ser691.

Belongs to the peptidase S8 family. In terms of assembly, monomer. Can self-associate to form dimers and higher multimers which may have increased LDLR degrading activity. The precursor protein but not the mature protein may form multimers. Interacts with APOB, VLDLR, LRP8/APOER2 and BACE1. The full-length immature form (pro-PCSK9) interacts with SCNN1A, SCNN1B and SCNN1G. The pro-PCSK9 form (via C-terminal domain) interacts with LDLR. Interacts (via the C-terminal domain) with ANXA2 (via repeat Annexin 1); the interaction inhibits the degradation of LDLR. It depends on Ca(2+) as a cofactor. In terms of processing, cleavage by furin and PCSK5 generates a truncated inactive protein that is unable to induce LDLR degradation. Post-translationally, undergoes autocatalytic cleavage in the endoplasmic reticulum to release the propeptide from the N-terminus and the cleavage of the propeptide is strictly required for its maturation and activation. The cleaved propeptide however remains associated with the catalytic domain through non-covalent interactions, preventing potential substrates from accessing its active site. As a result, it is secreted from cells as a propeptide-containing, enzymatically inactive protein. Phosphorylation protects the propeptide against proteolysis. Hepatocytes, kidney mesenchymal cells, intestinal ileum, colon epithelia and embryonic brain telencephalon neurons.

The protein resides in the cytoplasm. The protein localises to the secreted. It is found in the endosome. Its subcellular location is the lysosome. It localises to the cell surface. The protein resides in the endoplasmic reticulum. The protein localises to the golgi apparatus. With respect to regulation, its proteolytic activity is autoinhibited by the non-covalent binding of the propeptide to the catalytic domain. Inhibited by EGTA. Crucial player in the regulation of plasma cholesterol homeostasis. Binds to low-density lipid receptor family members: low density lipoprotein receptor (LDLR), very low density lipoprotein receptor (VLDLR), apolipoprotein E receptor (LRP1/APOER) and apolipoprotein receptor 2 (LRP8/APOER2), and promotes their degradation in intracellular acidic compartments. Acts via a non-proteolytic mechanism to enhance the degradation of the hepatic LDLR through a clathrin LDLRAP1/ARH-mediated pathway. May prevent the recycling of LDLR from endosomes to the cell surface or direct it to lysosomes for degradation. Can induce ubiquitination of LDLR leading to its subsequent degradation. Inhibits intracellular degradation of APOB via the autophagosome/lysosome pathway in a LDLR-independent manner. Involved in the disposal of non-acetylated intermediates of BACE1 in the early secretory pathway. Inhibits epithelial Na(+) channel (ENaC)-mediated Na(+) absorption by reducing ENaC surface expression primarily by increasing its proteasomal degradation. Regulates neuronal apoptosis via modulation of LRP8/APOER2 levels and related anti-apoptotic signaling pathways. This chain is Proprotein convertase subtilisin/kexin type 9 (Pcsk9), found in Mus musculus (Mouse).